Reading from the N-terminus, the 319-residue chain is Aspartate carbamoyltransferase catalytic subunit (319 aa).

Carbamoyl phosphate-binding residues include Arg54 and Thr55. Lys82 contributes to the L-aspartate binding site. Positions 104, 134, and 137 each coordinate carbamoyl phosphate. 2 residues coordinate L-aspartate: Arg171 and Arg227. Residues Gly271 and Pro272 each contribute to the carbamoyl phosphate site.

The protein belongs to the aspartate/ornithine carbamoyltransferase superfamily. ATCase family. In terms of assembly, heterododecamer (2C3:3R2) of six catalytic PyrB chains organized as two trimers (C3), and six regulatory PyrI chains organized as three dimers (R2).

The enzyme catalyses carbamoyl phosphate + L-aspartate = N-carbamoyl-L-aspartate + phosphate + H(+). It participates in pyrimidine metabolism; UMP biosynthesis via de novo pathway; (S)-dihydroorotate from bicarbonate: step 2/3. Functionally, catalyzes the condensation of carbamoyl phosphate and aspartate to form carbamoyl aspartate and inorganic phosphate, the committed step in the de novo pyrimidine nucleotide biosynthesis pathway. This chain is Aspartate carbamoyltransferase catalytic subunit, found in Kineococcus radiotolerans (strain ATCC BAA-149 / DSM 14245 / SRS30216).